A 376-amino-acid chain; its full sequence is Carbamoyl phosphate synthase small chain (376 aa).

Positions 1 to 181 are nucleophile; it reads MSKAVLVLED…VEPDGPPGVS (181 aa). The CPSase stretch occupies residues 1–183; it reads MSKAVLVLED…PDGPPGVSRF (183 aa). Residues S46, G232, G234, F261, Q264, N302, G304, and F305 each coordinate L-glutamine. The Glutamine amidotransferase type-1 domain occupies 184–376; that stretch reads TVAALDLGIK…FVELMAGEGR (193 aa). Active-site residues include H350 and E352.

This sequence belongs to the CarA family. In terms of assembly, composed of two chains; the small (or glutamine) chain promotes the hydrolysis of glutamine to ammonia, which is used by the large (or ammonia) chain to synthesize carbamoyl phosphate. Tetramer of heterodimers (alpha,beta)4.

The catalysed reaction is hydrogencarbonate + L-glutamine + 2 ATP + H2O = carbamoyl phosphate + L-glutamate + 2 ADP + phosphate + 2 H(+). The enzyme catalyses L-glutamine + H2O = L-glutamate + NH4(+). The protein operates within amino-acid biosynthesis; L-arginine biosynthesis; carbamoyl phosphate from bicarbonate: step 1/1. It participates in pyrimidine metabolism; UMP biosynthesis via de novo pathway; (S)-dihydroorotate from bicarbonate: step 1/3. In terms of biological role, small subunit of the glutamine-dependent carbamoyl phosphate synthetase (CPSase). CPSase catalyzes the formation of carbamoyl phosphate from the ammonia moiety of glutamine, carbonate, and phosphate donated by ATP, constituting the first step of 2 biosynthetic pathways, one leading to arginine and/or urea and the other to pyrimidine nucleotides. The small subunit (glutamine amidotransferase) binds and cleaves glutamine to supply the large subunit with the substrate ammonia. The protein is Carbamoyl phosphate synthase small chain of Mycobacterium tuberculosis (strain CDC 1551 / Oshkosh).